We begin with the raw amino-acid sequence, 220 residues long: Ribosome maturation factor RimP (220 aa).

The interval 173–220 is disordered; that stretch reads KKDKEERRQRKKARRRGEKGGVGDDGTAGEEQPDSAREGPARSASEGE.

It belongs to the RimP family.

The protein localises to the cytoplasm. Its function is as follows. Required for maturation of 30S ribosomal subunits. The chain is Ribosome maturation factor RimP from Chelativorans sp. (strain BNC1).